Consider the following 148-residue polypeptide: Snaclec B9 (148 aa).

A signal peptide spans Met1–Ala24. Intrachain disulfides connect Cys27–Cys38, Cys55–Cys144, and Cys121–Cys136. One can recognise a C-type lectin domain in the interval Tyr34–Lys145. 2 N-linked (GlcNAc...) asparagine glycosylation sites follow: Asn57 and Asn60.

This sequence belongs to the snaclec family. As to quaternary structure, heterodimer; disulfide-linked. In terms of tissue distribution, expressed by the venom gland.

Its subcellular location is the secreted. Its function is as follows. Interferes with one step of hemostasis (modulation of platelet aggregation, or coagulation cascade, for example). This Macrovipera lebetinus (Levantine viper) protein is Snaclec B9.